Reading from the N-terminus, the 371-residue chain is Aminomethyltransferase (371 aa).

This sequence belongs to the GcvT family. As to quaternary structure, the glycine cleavage system is composed of four proteins: P, T, L and H.

The enzyme catalyses N(6)-[(R)-S(8)-aminomethyldihydrolipoyl]-L-lysyl-[protein] + (6S)-5,6,7,8-tetrahydrofolate = N(6)-[(R)-dihydrolipoyl]-L-lysyl-[protein] + (6R)-5,10-methylene-5,6,7,8-tetrahydrofolate + NH4(+). Functionally, the glycine cleavage system catalyzes the degradation of glycine. The chain is Aminomethyltransferase from Nitrosococcus oceani (strain ATCC 19707 / BCRC 17464 / JCM 30415 / NCIMB 11848 / C-107).